Consider the following 214-residue polypeptide: Thymidylate kinase (214 aa).

9–16 is a binding site for ATP; that stretch reads GVDGSGKS.

The protein belongs to the thymidylate kinase family.

It catalyses the reaction dTMP + ATP = dTDP + ADP. Functionally, phosphorylation of dTMP to form dTDP in both de novo and salvage pathways of dTTP synthesis. The protein is Thymidylate kinase of Symbiobacterium thermophilum (strain DSM 24528 / JCM 14929 / IAM 14863 / T).